The following is a 361-amino-acid chain: MAGNSIGQVFRVTTFGESHGAALGCIVDGVPPGMALSEADLQHDLDRRRPGASRYTTARREADRVRILSGVFEGVTTGTSIGLLIENTDQRSQDYSAIKDLFRPGHADYSYEQKYGLRDYRGGGRSSARETAMRVAAGAIAKKYLQQQHGIVIRACLSRMGDIVCRQYDWAQVEQNPFFCPDAQQLEALDALMRDLKKCGDSIGAEVTVMATGVPPGLGDPVFDRLDADLAHALMSINAVKGVEIGDGFAVVGQRGSEHRDEISPSGFLSNHAGGILGGISSGQPLLARLALKPTSSIMVPGQTITRAGEATTIVTHGRHDPCVGIRAVPIAEAMMALVLMDHLLRQRAQCADVACTVPRW.

NADP(+) is bound by residues R48 and R54. Residues 125–127 (RSS), 238–239 (NA), G278, 293–297 (KPTSS), and R319 contribute to the FMN site.

It belongs to the chorismate synthase family. In terms of assembly, homotetramer. The cofactor is FMNH2.

The catalysed reaction is 5-O-(1-carboxyvinyl)-3-phosphoshikimate = chorismate + phosphate. It functions in the pathway metabolic intermediate biosynthesis; chorismate biosynthesis; chorismate from D-erythrose 4-phosphate and phosphoenolpyruvate: step 7/7. Catalyzes the anti-1,4-elimination of the C-3 phosphate and the C-6 proR hydrogen from 5-enolpyruvylshikimate-3-phosphate (EPSP) to yield chorismate, which is the branch point compound that serves as the starting substrate for the three terminal pathways of aromatic amino acid biosynthesis. This reaction introduces a second double bond into the aromatic ring system. The polypeptide is Chorismate synthase (Edwardsiella ictaluri (strain 93-146)).